We begin with the raw amino-acid sequence, 549 residues long: Polynucleotide 5'-hydroxyl-kinase nol-9 (549 aa).

190 to 197 is an ATP binding site; the sequence is GHKGAGKS.

It belongs to the Clp1 family. NOL9/GRC3 subfamily.

The protein resides in the nucleus. Its subcellular location is the nucleolus. In terms of biological role, polynucleotide 5'-kinase involved in rRNA processing. This is Polynucleotide 5'-hydroxyl-kinase nol-9 (nol-9) from Caenorhabditis elegans.